We begin with the raw amino-acid sequence, 442 residues long: Alpha-1,6-mannosyl-glycoprotein 2-beta-N-acetylglucosaminyltransferase (442 aa).

Over 1–9 the chain is Cytoplasmic; sequence MRFRIYKRK. The helical; Signal-anchor for type II membrane protein transmembrane segment at 10-29 threads the bilayer; the sequence is VLILTLVVAACGFVLWSSNG. Topologically, residues 30 to 442 are lumenal; it reads RQRKNDALAP…ELCKSYRRLQ (413 aa). N-linked (GlcNAc...) asparagine glycans are attached at residues asparagine 64 and asparagine 81. Residues 118 to 122 and aspartate 149 contribute to the substrate site; that span reads QVHNR. Residues cysteine 191 and cysteine 205 are joined by a disulfide bond. 224–228 contributes to the substrate binding site; sequence QTKHH. Aspartate 256 contacts Mn(2+). Cysteine 278 and cysteine 281 are disulfide-bonded. Residue arginine 293 coordinates substrate. Intrachain disulfides connect cysteine 329–cysteine 352, cysteine 334–cysteine 435, and cysteine 373–cysteine 381. Histidine 369 lines the Mn(2+) pocket.

It belongs to the glycosyltransferase 16 (GT16) protein family. As to quaternary structure, homodimer. The cofactor is Mn(2+). In terms of tissue distribution, detected in liver (at protein level). Detected in liver, brain, thymus and spleen.

It localises to the golgi apparatus membrane. The catalysed reaction is an N(4)-{beta-D-GlcNAc-(1-&gt;2)-alpha-D-Man-(1-&gt;3)-[alpha-D-Man-(1-&gt;6)]-beta-D-Man-(1-&gt;4)-beta-D-GlcNAc-(1-&gt;4)-beta-D-GlcNAc}-L-asparaginyl-[protein] + UDP-N-acetyl-alpha-D-glucosamine = N(4)-{beta-D-GlcNAc-(1-&gt;2)-alpha-D-Man-(1-&gt;3)-[beta-D-GlcNAc-(1-&gt;2)-alpha-D-Man-(1-&gt;6)]-beta-D-Man-(1-&gt;4)-beta-D-GlcNAc-(1-&gt;4)-beta-D-GlcNAc}-L-asparaginyl-[protein] + UDP + H(+). Its pathway is protein modification; protein glycosylation. Functionally, plays an essential role in protein N-glycosylation. Catalyzes the transfer of N-acetylglucosamine (GlcNAc) onto the free terminal mannose moiety in the core structure of the nascent N-linked glycan chain, giving rise to the second branch in complex glycans. The sequence is that of Alpha-1,6-mannosyl-glycoprotein 2-beta-N-acetylglucosaminyltransferase (Mgat2) from Rattus norvegicus (Rat).